The sequence spans 328 residues: GTPase Obg (328 aa).

One can recognise an Obg domain in the interval 2-160 (YNFKDSVNIT…LSVRLELFLV (159 aa)). The region spanning 161–326 (ADIGLVGLPN…LIKEFFILAK (166 aa)) is the OBG-type G domain. GTP contacts are provided by residues 167–174 (GLPNAGKS), 192–196 (FTTKI), 213–216 (DIPG), 280–283 (NKLD), and 307–309 (SIY). Mg(2+) contacts are provided by Ser-174 and Thr-194.

This sequence belongs to the TRAFAC class OBG-HflX-like GTPase superfamily. OBG GTPase family. Monomer. Mg(2+) serves as cofactor.

The protein localises to the cytoplasm. Functionally, an essential GTPase which binds GTP, GDP and possibly (p)ppGpp with moderate affinity, with high nucleotide exchange rates and a fairly low GTP hydrolysis rate. Plays a role in control of the cell cycle, stress response, ribosome biogenesis and in those bacteria that undergo differentiation, in morphogenesis control. This chain is GTPase Obg, found in Borreliella burgdorferi (strain ATCC 35210 / DSM 4680 / CIP 102532 / B31) (Borrelia burgdorferi).